The following is a 199-amino-acid chain: uncharacterized protein (199 aa).

This is an uncharacterized protein from Rhodococcus erythropolis (Arthrobacter picolinophilus).